A 62-amino-acid chain; its full sequence is uncharacterized protein (62 aa).

This is an uncharacterized protein from Escherichia coli.